The primary structure comprises 340 residues: Ketol-acid reductoisomerase (NADP(+)) (340 aa).

The KARI N-terminal Rossmann domain occupies 3-182 (VQMEYEKDVK…GAARVGLLET (180 aa)). Residues 26–29 (YGSQ), R49, S53, and 83–86 (DEIQ) each bind NADP(+). The active site involves H108. G134 is an NADP(+) binding site. Residues 183 to 328 (TYKEETEEDL…AELRKAMPFV (146 aa)) enclose the KARI C-terminal knotted domain. D191, E195, E227, and E231 together coordinate Mg(2+). S252 lines the substrate pocket.

It belongs to the ketol-acid reductoisomerase family. Mg(2+) serves as cofactor.

The catalysed reaction is (2R)-2,3-dihydroxy-3-methylbutanoate + NADP(+) = (2S)-2-acetolactate + NADPH + H(+). It catalyses the reaction (2R,3R)-2,3-dihydroxy-3-methylpentanoate + NADP(+) = (S)-2-ethyl-2-hydroxy-3-oxobutanoate + NADPH + H(+). The protein operates within amino-acid biosynthesis; L-isoleucine biosynthesis; L-isoleucine from 2-oxobutanoate: step 2/4. It participates in amino-acid biosynthesis; L-valine biosynthesis; L-valine from pyruvate: step 2/4. Functionally, involved in the biosynthesis of branched-chain amino acids (BCAA). Catalyzes an alkyl-migration followed by a ketol-acid reduction of (S)-2-acetolactate (S2AL) to yield (R)-2,3-dihydroxy-isovalerate. In the isomerase reaction, S2AL is rearranged via a Mg-dependent methyl migration to produce 3-hydroxy-3-methyl-2-ketobutyrate (HMKB). In the reductase reaction, this 2-ketoacid undergoes a metal-dependent reduction by NADPH to yield (R)-2,3-dihydroxy-isovalerate. The protein is Ketol-acid reductoisomerase (NADP(+)) of Streptococcus pneumoniae (strain CGSP14).